The primary structure comprises 162 residues: Phosphopantetheine adenylyltransferase (162 aa).

Serine 9 lines the substrate pocket. Residues 9-10 (SF) and histidine 17 each bind ATP. Substrate is bound by residues lysine 41, threonine 73, and arginine 87. Residues 88–90 (GLR), glutamate 98, and 122–128 (NQNISSS) each bind ATP.

It belongs to the bacterial CoaD family. As to quaternary structure, homohexamer. The cofactor is Mg(2+).

Its subcellular location is the cytoplasm. It catalyses the reaction (R)-4'-phosphopantetheine + ATP + H(+) = 3'-dephospho-CoA + diphosphate. The protein operates within cofactor biosynthesis; coenzyme A biosynthesis; CoA from (R)-pantothenate: step 4/5. Functionally, reversibly transfers an adenylyl group from ATP to 4'-phosphopantetheine, yielding dephospho-CoA (dPCoA) and pyrophosphate. The sequence is that of Phosphopantetheine adenylyltransferase from Leuconostoc mesenteroides subsp. mesenteroides (strain ATCC 8293 / DSM 20343 / BCRC 11652 / CCM 1803 / JCM 6124 / NCDO 523 / NBRC 100496 / NCIMB 8023 / NCTC 12954 / NRRL B-1118 / 37Y).